The sequence spans 1368 residues: DNA-directed RNA polymerase subunit beta (1368 aa).

The protein belongs to the RNA polymerase beta chain family. The RNAP catalytic core consists of 2 alpha, 1 beta, 1 beta' and 1 omega subunit. When a sigma factor is associated with the core the holoenzyme is formed, which can initiate transcription.

The catalysed reaction is RNA(n) + a ribonucleoside 5'-triphosphate = RNA(n+1) + diphosphate. DNA-dependent RNA polymerase catalyzes the transcription of DNA into RNA using the four ribonucleoside triphosphates as substrates. The protein is DNA-directed RNA polymerase subunit beta of Ralstonia nicotianae (strain ATCC BAA-1114 / GMI1000) (Ralstonia solanacearum).